The sequence spans 469 residues: E3 ubiquitin-protein ligase TRAIP (469 aa).

An RING-type zinc finger spans residues cysteine 7–arginine 50. Coiled-coil stretches lie at residues glutamate 70–arginine 177 and cysteine 201–leucine 280. Residues leucine 211–serine 469 are interaction with CYLD. Lysine 304 is covalently cross-linked (Glycyl lysine isopeptide (Lys-Gly) (interchain with G-Cter in SUMO2)). The PIP-box motif lies at glutamine 460 to serine 469.

Belongs to the TRAIP family. In terms of assembly, interacts (via PIP-box) with PCNA. Binds TRAF1, TRAF2, TRAF3, TRAF5 and TRAF6 is part of the receptor-TRAF signaling complex. May interact with CYLD; the C-terminus interacts with CYLD, however the interaction was not detected with the full-length protein. Interacts with POLK and POLN. Interacts with UIMC1. Post-translationally, sumoylated; sumoylation is required for nuclear localization. Sumoylation increases protein stability, possibly by preventing ubiquitination. Autoubiquitinated.

The protein resides in the nucleus. Its subcellular location is the nucleoplasm. It is found in the nucleolus. It localises to the chromosome. The protein localises to the cytoplasm. The protein resides in the perinuclear region. It catalyses the reaction S-ubiquitinyl-[E2 ubiquitin-conjugating enzyme]-L-cysteine + [acceptor protein]-L-lysine = [E2 ubiquitin-conjugating enzyme]-L-cysteine + N(6)-ubiquitinyl-[acceptor protein]-L-lysine.. It functions in the pathway protein modification; protein ubiquitination. In terms of biological role, E3 ubiquitin ligase required to protect genome stability in response to replication stress. Acts as a key regulator of interstrand cross-link repair, which takes place when both strands of duplex DNA are covalently tethered together, thereby blocking replication and transcription. Controls the choice between the two pathways of replication-coupled interstrand-cross-link repair by mediating ubiquitination of MCM7 subunit of the CMG helicase complex. Short ubiquitin chains on MCM7 promote recruitment of DNA glycosylase NEIL3. If the interstrand cross-link cannot be cleaved by NEIL3, the ubiquitin chains continue to grow on MCM7, promoting the unloading of the CMG helicase complex by the VCP/p97 ATPase, enabling the Fanconi anemia DNA repair pathway. Only catalyzes ubiquitination of MCM7 when forks converge. Also involved in the repair of covalent DNA-protein cross-links (DPCs) during DNA synthesis: promotes ubiquitination of DPCs, leading to their degradation by the proteasome. Has also been proposed to play a role in promoting translesion synthesis by mediating the assembly of 'Lys-63'-linked poly-ubiquitin chains on the Y-family polymerase POLN in order to facilitate bypass of DNA lesions and preserve genomic integrity. The function in translesion synthesis is however controversial. Acts as a regulator of the spindle assembly checkpoint. Also acts as a negative regulator of innate immune signaling by inhibiting activation of NF-kappa-B mediated by TNF. Negatively regulates TLR3/4- and RIG-I-mediated IRF3 activation and subsequent IFNB1 production and cellular antiviral response by promoting 'Lys-48'-linked polyubiquitination of TNK1 leading to its proteasomal degradation. This Homo sapiens (Human) protein is E3 ubiquitin-protein ligase TRAIP.